The following is a 681-amino-acid chain: PTS system glucose-specific EIICBA component (681 aa).

A PTS EIIC type-1 domain is found at lysine 3 to aspartate 414. 10 helical membrane passes run leucine 16 to methionine 36, methionine 73 to alanine 93, isoleucine 126 to alanine 146, phenylalanine 170 to tryptophan 190, alanine 199 to isoleucine 219, phenylalanine 273 to tyrosine 293, valine 303 to proline 323, phenylalanine 328 to leucine 348, leucine 355 to proline 375, and valine 383 to valine 403. One can recognise a PTS EIIB type-1 domain in the interval threonine 425–glutamate 506. Cysteine 447 acts as the Phosphocysteine intermediate; for EIIB activity in catalysis. Positions aspartate 551–glutamine 655 constitute a PTS EIIA type-1 domain. Histidine 603 acts as the Tele-phosphohistidine intermediate; for EIIA activity in catalysis.

Its subcellular location is the cell membrane. It carries out the reaction N(pros)-phospho-L-histidyl-[protein] + D-glucose(out) = D-glucose 6-phosphate(in) + L-histidyl-[protein]. Functionally, the phosphoenolpyruvate-dependent sugar phosphotransferase system (sugar PTS), a major carbohydrate active transport system, catalyzes the phosphorylation of incoming sugar substrates concomitantly with their translocation across the cell membrane. This system is involved in glucose transport. The polypeptide is PTS system glucose-specific EIICBA component (ptsG) (Staphylococcus aureus (strain bovine RF122 / ET3-1)).